The sequence spans 507 residues: ATP synthase subunit alpha, chloroplastic (507 aa).

170–177 (GDRQTGKT) provides a ligand contact to ATP.

This sequence belongs to the ATPase alpha/beta chains family. F-type ATPases have 2 components, CF(1) - the catalytic core - and CF(0) - the membrane proton channel. CF(1) has five subunits: alpha(3), beta(3), gamma(1), delta(1), epsilon(1). CF(0) has four main subunits: a, b, b' and c.

The protein resides in the plastid. It is found in the chloroplast thylakoid membrane. The enzyme catalyses ATP + H2O + 4 H(+)(in) = ADP + phosphate + 5 H(+)(out). Produces ATP from ADP in the presence of a proton gradient across the membrane. The alpha chain is a regulatory subunit. This chain is ATP synthase subunit alpha, chloroplastic, found in Oryza nivara (Indian wild rice).